We begin with the raw amino-acid sequence, 303 residues long: Putative ankyrin repeat protein R601 (303 aa).

ANK repeat units follow at residues 86–115, 117–146, 147–176, and 200–233; these read DDNM…DVTV, NNFA…DITV, DNYF…NVDS, and NADV…DVSY.

This chain is Putative ankyrin repeat protein R601, found in Acanthamoeba polyphaga (Amoeba).